Here is a 482-residue protein sequence, read N- to C-terminus: Cytochrome c-552 (482 aa).

Positions 1–26 (MIKVSNALQRILIGAALALFGGGAQA) are cleaved as a signal peptide. H98 contacts heme c. Positions 126, 129, and 130 each coordinate heme. The heme c site is built by C164, C167, H168, C213, C216, and H217. Ca(2+) is bound by residues E219, Y220, K265, and Q267. Residue Y220 participates in substrate binding. H268 serves as a coordination point for substrate. Residues H279, C286, C289, H290, H305, C318, C321, H322, and H397 each coordinate heme c.

This sequence belongs to the cytochrome c-552 family. Requires Ca(2+) as cofactor. The cofactor is heme c.

Its subcellular location is the periplasm. It catalyses the reaction 6 Fe(III)-[cytochrome c] + NH4(+) + 2 H2O = 6 Fe(II)-[cytochrome c] + nitrite + 8 H(+). It participates in nitrogen metabolism; nitrate reduction (assimilation). In terms of biological role, catalyzes the reduction of nitrite to ammonia, consuming six electrons in the process. The protein is Cytochrome c-552 of Edwardsiella ictaluri (strain 93-146).